Reading from the N-terminus, the 156-residue chain is MPRKGPAPKRPLVVDPVYGSPTVTQLVNRVLVDGKKSTAERIVYGALEGVRDKTQGDPATVLKRALDNVRPSLEVKSRRVGGTTYQVPVDVRPSRATALAMRWLVDYSRVRREKTMTERLMNEILDASNGLGAAVKRREDTHKMAESNKAFAHYRW.

This sequence belongs to the universal ribosomal protein uS7 family. As to quaternary structure, part of the 30S ribosomal subunit. Contacts proteins S9 and S11.

One of the primary rRNA binding proteins, it binds directly to 16S rRNA where it nucleates assembly of the head domain of the 30S subunit. Is located at the subunit interface close to the decoding center, probably blocks exit of the E-site tRNA. The sequence is that of Small ribosomal subunit protein uS7 from Beutenbergia cavernae (strain ATCC BAA-8 / DSM 12333 / CCUG 43141 / JCM 11478 / NBRC 16432 / NCIMB 13614 / HKI 0122).